The sequence spans 184 residues: Large ribosomal subunit protein uL6 (184 aa).

Belongs to the universal ribosomal protein uL6 family. In terms of assembly, part of the 50S ribosomal subunit.

Its function is as follows. This protein binds to the 23S rRNA, and is important in its secondary structure. It is located near the subunit interface in the base of the L7/L12 stalk, and near the tRNA binding site of the peptidyltransferase center. The chain is Large ribosomal subunit protein uL6 from Thermotoga neapolitana (strain ATCC 49049 / DSM 4359 / NBRC 107923 / NS-E).